We begin with the raw amino-acid sequence, 111 residues long: Universal stress protein B (111 aa).

Helical transmembrane passes span 1 to 21 (MISTVSLFWALCVVCVINMAR) and 90 to 110 (FILTSALCGLVAIGLIGLAIW).

Belongs to the universal stress protein B family.

It localises to the cell inner membrane. This Erwinia tasmaniensis (strain DSM 17950 / CFBP 7177 / CIP 109463 / NCPPB 4357 / Et1/99) protein is Universal stress protein B.